The chain runs to 400 residues: Enoyl-[acyl-carrier-protein] reductase [NADH] (400 aa).

NAD(+)-binding positions include 48 to 53 (GASTGY), 74 to 75 (FE), 111 to 112 (DA), and 139 to 140 (LA). Position 225 (Tyr225) interacts with substrate. The active-site Proton donor is Tyr235. NAD(+) contacts are provided by residues Lys244 and 273–275 (VVT).

Belongs to the TER reductase family. In terms of assembly, monomer.

The enzyme catalyses a 2,3-saturated acyl-[ACP] + NAD(+) = a (2E)-enoyl-[ACP] + NADH + H(+). It functions in the pathway lipid metabolism; fatty acid biosynthesis. In terms of biological role, involved in the final reduction of the elongation cycle of fatty acid synthesis (FAS II). Catalyzes the reduction of a carbon-carbon double bond in an enoyl moiety that is covalently linked to an acyl carrier protein (ACP). The polypeptide is Enoyl-[acyl-carrier-protein] reductase [NADH] (Burkholderia multivorans (strain ATCC 17616 / 249)).